A 251-amino-acid chain; its full sequence is Triosephosphate isomerase (251 aa).

Residue 12–14 (NWK) participates in substrate binding. H98 (electrophile) is an active-site residue. E168 acts as the Proton acceptor in catalysis. Substrate contacts are provided by residues G174, S213, and 234-235 (GG).

Belongs to the triosephosphate isomerase family. Homodimer.

The protein localises to the cytoplasm. It carries out the reaction D-glyceraldehyde 3-phosphate = dihydroxyacetone phosphate. Its pathway is carbohydrate biosynthesis; gluconeogenesis. It participates in carbohydrate degradation; glycolysis; D-glyceraldehyde 3-phosphate from glycerone phosphate: step 1/1. In terms of biological role, involved in the gluconeogenesis. Catalyzes stereospecifically the conversion of dihydroxyacetone phosphate (DHAP) to D-glyceraldehyde-3-phosphate (G3P). The protein is Triosephosphate isomerase of Bradyrhizobium diazoefficiens (strain JCM 10833 / BCRC 13528 / IAM 13628 / NBRC 14792 / USDA 110).